Reading from the N-terminus, the 287-residue chain is Cyclopropane mycolic acid synthase 3 (287 aa).

Residues Tyr33–Ser34, Leu68–Gly76, Thr94–Gln99, and Trp123–Glu124 each bind S-adenosyl-L-methionine. The active site involves Cys269.

The protein belongs to the CFA/CMAS family. Homodimer.

It localises to the cytoplasm. It carries out the reaction a 1-acyl-2-(9Z)-enoyl-sn-glycero-3-phospholipid + S-adenosyl-L-methionine = a 1-acyl-2-(9-cyclopronane)-acyl-sn-glycero-3-phospholipid + S-adenosyl-L-homocysteine + H(+). The protein operates within lipid metabolism; mycolic acid biosynthesis. Involved in the phagosome maturation block (PMB). Catalyzes the conversion of a double bond to a cyclopropane ring at the proximal position of an alpha mycolic acid via the transfer of a methylene group from S-adenosyl-L-methionine. It can use cis, cis 11,14-eicosadienoic acid and linoelaidic acid as substrate. Cyclopropanated mycolic acids are key factors participating in cell envelope permeability, host immunomodulation and persistence. The chain is Cyclopropane mycolic acid synthase 3 (pcaA) from Mycobacterium tuberculosis (strain CDC 1551 / Oshkosh).